Here is a 259-residue protein sequence, read N- to C-terminus: ATP synthase subunit a (259 aa).

Positions 1–10 are cleaved as a propeptide — removed in mature form; sequence MFNLLNTYIT. 6 helical membrane-spanning segments follow: residues 36-56, 92-112, 125-145, 150-170, 191-211, and 216-236; these read LTTFSLYTIIVLLVITSLYTL, WGLYFPMIFTLFMFIFIANLI, LVFIISLSIVIWLGNTILGLY, VFFSLFVPAGTPLPLVPLLVI, ILAGHLLMVILAGLTFNFMLI, and LVFGFVPLAMILAIMMLEFAI.

The protein belongs to the ATPase A chain family. As to quaternary structure, F-type ATPases have 2 components, CF(1) - the catalytic core - and CF(0) - the membrane proton channel. In yeast, the dimeric form of ATP synthase consists of 17 polypeptides: alpha, beta, gamma, delta, epsilon, 4 (B), 5 (OSCP), 6 (A), 8, 9 (C), d, E (Tim11), f, g, h, i/j and k.

Its subcellular location is the mitochondrion inner membrane. Its function is as follows. Mitochondrial membrane ATP synthase (F(1)F(0) ATP synthase or Complex V) produces ATP from ADP in the presence of a proton gradient across the membrane which is generated by electron transport complexes of the respiratory chain. F-type ATPases consist of two structural domains, F(1) - containing the extramembraneous catalytic core and F(0) - containing the membrane proton channel, linked together by a central stalk and a peripheral stalk. During catalysis, ATP synthesis in the catalytic domain of F(1) is coupled via a rotary mechanism of the central stalk subunits to proton translocation. Key component of the proton channel; it may play a direct role in the translocation of protons across the membrane. The sequence is that of ATP synthase subunit a (ATP6) from Saccharomyces cerevisiae (strain ATCC 204508 / S288c) (Baker's yeast).